Reading from the N-terminus, the 397-residue chain is Acetate kinase (397 aa).

Mg(2+) is bound at residue Asn7. ATP is bound at residue Lys14. Substrate is bound at residue Arg91. Asp148 functions as the Proton donor/acceptor in the catalytic mechanism. Residues 208–212 (HLGNG), 283–285 (DFR), and 331–335 (GIGEN) contribute to the ATP site. Glu384 contacts Mg(2+).

The protein belongs to the acetokinase family. As to quaternary structure, homodimer. It depends on Mg(2+) as a cofactor. Mn(2+) serves as cofactor.

It localises to the cytoplasm. The enzyme catalyses acetate + ATP = acetyl phosphate + ADP. The protein operates within metabolic intermediate biosynthesis; acetyl-CoA biosynthesis; acetyl-CoA from acetate: step 1/2. Its function is as follows. Catalyzes the formation of acetyl phosphate from acetate and ATP. Can also catalyze the reverse reaction. In Treponema denticola (strain ATCC 35405 / DSM 14222 / CIP 103919 / JCM 8153 / KCTC 15104), this protein is Acetate kinase.